The following is a 79-amino-acid chain: U-actitoxin-Avd9d (79 aa).

The N-terminal stretch at 1 to 19 is a signal peptide; sequence NLKVLAVFVLCAILVVVTA. Positions 20-37 are excised as a propeptide; the sequence is ERRGTETGGYKKDTLEDL. The ShKT domain occupies 44-79; sequence CFDSFKEATCHMAKTNRLCKTSAKYQINCKKTCGLC. 3 cysteine pairs are disulfide-bonded: C44-C79, C53-C72, and C62-C76. A crucial for binding to potassium channels region spans residues 67-68; the sequence is KY.

This sequence belongs to the sea anemone type 1 potassium channel toxin family. Type 1b subfamily.

The protein resides in the secreted. It localises to the nematocyst. Its function is as follows. Inhibits voltage-gated potassium channels (Kv1/KCNA). The sequence is that of U-actitoxin-Avd9d from Anemonia viridis (Snakelocks anemone).